Consider the following 1510-residue polypeptide: Cysteine-tryptophan domain-containing zinc finger protein 5 (1510 aa).

The span at 174–196 shows a compositional bias: polar residues; sequence YCQRTSSENDSNHSQQLLNSGPE. 4 disordered regions span residues 174-198, 449-497, 555-574, and 582-616; these read YCQRTSSENDSNHSQQLLNSGPEQK, SSLD…CAKD, KPNYDTTRKPNGENEGYVLD, and LHTEDKSLKTEKESATSGLTDKDFSGGGNDGDHKI. Positions 454–465 are enriched in basic and acidic residues; that stretch reads GFSHKTKSDKCN. A compositionally biased stretch (polar residues) spans 467–476; sequence QPVTTSSQLQ. 2 stretches are compositionally biased toward basic and acidic residues: residues 479-497 and 556-574; these read PAKKTSLKRDRGKVVCAKD and PNYDTTRKPNGENEGYVLD. The CW-type zinc-finger motif lies at 645–698; the sequence is SEPVDQWVCCDKCETWRLLPYGMNSDTLPKKWRCSMQSWLPGMNNCKLSEGETT. Zn(2+)-binding residues include C654, C657, C678, and C690. The segment covering 768–780 has biased composition (basic and acidic residues); that stretch reads KQKRIESSDKGEK. 3 disordered regions span residues 768–893, 1003–1050, and 1149–1194; these read KQKR…RDLF, STAA…LDRH, and LPIH…VRPD. A compositionally biased stretch (polar residues) spans 781 to 790; it reads STVTISSGQT. The segment covering 874-893 has biased composition (basic and acidic residues); the sequence is NSDRGARASDAGKSDPRDLF. The span at 1003 to 1016 shows a compositional bias: low complexity; that stretch reads STAATSSSSKVSSS. Polar residues-rich tracts occupy residues 1026–1040 and 1162–1182; these read TRTSPVESVSSSPLR and PDQNGKTLPQYNSNQSDQAKL.

In terms of tissue distribution, highly expressed in young panicles. Expressed at low levels in leaf sheaths, nodes, internodes and axillary buds.

Its subcellular location is the nucleus. Functionally, binds to histones H3K4me1, H3K4me2 and H3K4me3 in GST pull-down assay. May facilitate the recruitment of effectors to mediate gene expression. The sequence is that of Cysteine-tryptophan domain-containing zinc finger protein 5 from Oryza sativa subsp. japonica (Rice).